We begin with the raw amino-acid sequence, 525 residues long: Peptide chain release factor 3 (525 aa).

One can recognise a tr-type G domain in the interval 9 to 276; the sequence is AKRRTFAIIS…GFTRYAPAPQ (268 aa). GTP is bound by residues 18 to 25, 86 to 90, and 140 to 143; these read SHPDAGKT, DTPGH, and NKFD.

It belongs to the TRAFAC class translation factor GTPase superfamily. Classic translation factor GTPase family. PrfC subfamily.

It localises to the cytoplasm. In terms of biological role, increases the formation of ribosomal termination complexes and stimulates activities of RF-1 and RF-2. It binds guanine nucleotides and has strong preference for UGA stop codons. It may interact directly with the ribosome. The stimulation of RF-1 and RF-2 is significantly reduced by GTP and GDP, but not by GMP. The sequence is that of Peptide chain release factor 3 from Francisella tularensis subsp. novicida (strain U112).